The primary structure comprises 193 residues: Xanthine phosphoribosyltransferase (193 aa).

The xanthine site is built by leucine 20 and threonine 27. 128–132 lines the 5-phospho-alpha-D-ribose 1-diphosphate pocket; it reads ANGQA. Xanthine is bound at residue lysine 156.

The protein belongs to the purine/pyrimidine phosphoribosyltransferase family. Xpt subfamily. Homodimer.

The protein localises to the cytoplasm. The catalysed reaction is XMP + diphosphate = xanthine + 5-phospho-alpha-D-ribose 1-diphosphate. Its pathway is purine metabolism; XMP biosynthesis via salvage pathway; XMP from xanthine: step 1/1. Its function is as follows. Converts the preformed base xanthine, a product of nucleic acid breakdown, to xanthosine 5'-monophosphate (XMP), so it can be reused for RNA or DNA synthesis. This chain is Xanthine phosphoribosyltransferase, found in Streptococcus agalactiae serotype Ia (strain ATCC 27591 / A909 / CDC SS700).